Reading from the N-terminus, the 502-residue chain is ATP synthase subunit alpha (502 aa).

The interval 115-135 (VDGLGPINTTNTRPIESPAPG) is disordered. Residue 169-176 (GDRQTGKT) coordinates ATP.

Belongs to the ATPase alpha/beta chains family. In terms of assembly, F-type ATPases have 2 components, CF(1) - the catalytic core - and CF(0) - the membrane proton channel. CF(1) has five subunits: alpha(3), beta(3), gamma(1), delta(1), epsilon(1). CF(0) has three main subunits: a(1), b(2) and c(9-12). The alpha and beta chains form an alternating ring which encloses part of the gamma chain. CF(1) is attached to CF(0) by a central stalk formed by the gamma and epsilon chains, while a peripheral stalk is formed by the delta and b chains.

Its subcellular location is the cell membrane. It catalyses the reaction ATP + H2O + 4 H(+)(in) = ADP + phosphate + 5 H(+)(out). Produces ATP from ADP in the presence of a proton gradient across the membrane. The alpha chain is a regulatory subunit. This chain is ATP synthase subunit alpha, found in Bacillus cereus (strain G9842).